Consider the following 334-residue polypeptide: Holliday junction branch migration complex subunit RuvB (334 aa).

Residues 4–184 (ADRLISAEPI…FGIVQRLEFY (181 aa)) form a large ATPase domain (RuvB-L) region. ATP is bound by residues Ile-23, Arg-24, Gly-65, Lys-68, Thr-69, Thr-70, 131 to 133 (EDY), Arg-174, Tyr-184, and Arg-221. Thr-69 lines the Mg(2+) pocket. A small ATPAse domain (RuvB-S) region spans residues 185 to 255 (QVADLQHIVS…VAMQALDMLN (71 aa)). Residues 258–334 (AEGFDYMDRK…YKHFGMVREE (77 aa)) form a head domain (RuvB-H) region. 3 residues coordinate DNA: Arg-294, Arg-313, and Arg-318.

Belongs to the RuvB family. Homohexamer. Forms an RuvA(8)-RuvB(12)-Holliday junction (HJ) complex. HJ DNA is sandwiched between 2 RuvA tetramers; dsDNA enters through RuvA and exits via RuvB. An RuvB hexamer assembles on each DNA strand where it exits the tetramer. Each RuvB hexamer is contacted by two RuvA subunits (via domain III) on 2 adjacent RuvB subunits; this complex drives branch migration. In the full resolvosome a probable DNA-RuvA(4)-RuvB(12)-RuvC(2) complex forms which resolves the HJ.

The protein resides in the cytoplasm. The enzyme catalyses ATP + H2O = ADP + phosphate + H(+). Its function is as follows. The RuvA-RuvB-RuvC complex processes Holliday junction (HJ) DNA during genetic recombination and DNA repair, while the RuvA-RuvB complex plays an important role in the rescue of blocked DNA replication forks via replication fork reversal (RFR). RuvA specifically binds to HJ cruciform DNA, conferring on it an open structure. The RuvB hexamer acts as an ATP-dependent pump, pulling dsDNA into and through the RuvAB complex. RuvB forms 2 homohexamers on either side of HJ DNA bound by 1 or 2 RuvA tetramers; 4 subunits per hexamer contact DNA at a time. Coordinated motions by a converter formed by DNA-disengaged RuvB subunits stimulates ATP hydrolysis and nucleotide exchange. Immobilization of the converter enables RuvB to convert the ATP-contained energy into a lever motion, pulling 2 nucleotides of DNA out of the RuvA tetramer per ATP hydrolyzed, thus driving DNA branch migration. The RuvB motors rotate together with the DNA substrate, which together with the progressing nucleotide cycle form the mechanistic basis for DNA recombination by continuous HJ branch migration. Branch migration allows RuvC to scan DNA until it finds its consensus sequence, where it cleaves and resolves cruciform DNA. In Serratia proteamaculans (strain 568), this protein is Holliday junction branch migration complex subunit RuvB.